The following is an 897-amino-acid chain: Protein SAP1 (897 aa).

5 disordered regions span residues 112–144 (EEPA…PVFQ), 195–219 (PSKP…PPLK), 302–398 (QMSD…TKST), 413–438 (SKSN…PNSV), and 456–561 (KKVA…REEP). The segment covering 120–137 (MPSSKTYTNHSSSFTRST) has biased composition (polar residues). Over residues 209–219 (NPIEHNDPPLK) the composition is skewed to basic and acidic residues. The segment covering 307–321 (SVTSSTSSNKSVSSS) has biased composition (low complexity). Residues 364–380 (LETSTTMDSSKIRNPQI) show a composition bias toward polar residues. Positions 468–478 (KKSHPILKSKT) are enriched in basic residues. Over residues 480-496 (KVPNSSSKKTSSHPSRP) the composition is skewed to low complexity. The span at 497–523 (VSNSKPYSHGASQNKKPSKNQTTSMSK) shows a compositional bias: polar residues. Residue Ser536 is modified to Phosphoserine. ATP is bound at residue 645–652 (GPPGTGKT).

This sequence belongs to the AAA ATPase family. As to quaternary structure, interacts with SPT2/SIN1.

The polypeptide is Protein SAP1 (SAP1) (Saccharomyces cerevisiae (strain ATCC 204508 / S288c) (Baker's yeast)).